Consider the following 194-residue polypeptide: ECF RNA polymerase sigma factor SigX (194 aa).

Residues 32–45 carry the Polymerase core binding motif; sequence DLLQEVYIRVLNSY. The H-T-H motif DNA-binding region spans 136-155; that stretch reads IQETAKALRFSESKVKTTQH.

This sequence belongs to the sigma-70 factor family. ECF subfamily. Interacts transiently with the RNAP core.

The protein resides in the cell membrane. Its function is as follows. Sigma factors are initiation factors that promote the attachment of RNA polymerase (RNAP) to specific initiation sites and are then released. May be involved in the regulation of iron metabolism. Associates with RNAP core during early growth phases, association decreases as cells age. The sequence is that of ECF RNA polymerase sigma factor SigX (sigX) from Bacillus subtilis (strain 168).